The sequence spans 767 residues: Dipeptidyl peptidase 4 (767 aa).

Topologically, residues 1–6 are cytoplasmic; it reads MKTPWK. A helical; Signal-anchor for type II membrane protein transmembrane segment spans residues 7 to 28; sequence VLLGLLGVAALVTIITVPVVLL. The Extracellular portion of the chain corresponds to 29–767; sequence NKDEAAADSR…HFLQQCFSLR (739 aa). Asn83, Asn90, Asn148, Asn217, Asn227, and Asn319 each carry an N-linked (GlcNAc...) asparagine glycan. Cystine bridges form between Cys326–Cys337, Cys383–Cys395, Cys445–Cys448, and Cys455–Cys473. N-linked (GlcNAc...) asparagine glycosylation is present at Asn521. Ser631 (charge relay system) is an active-site residue. Cys650 and Cys763 are joined by a disulfide. Asn686 carries an N-linked (GlcNAc...) asparagine glycan. Residues Asp709 and His741 each act as charge relay system in the active site.

It belongs to the peptidase S9B family. DPPIV subfamily. As to quaternary structure, monomer. Homodimer. Heterodimer with Seprase (FAP). Requires homodimerization for optimal dipeptidyl peptidase activity and T-cell costimulation. Found in a membrane raft complex, at least composed of BCL10, CARD11, DPP4 and IKBKB. Associates with collagen. Interacts with PTPRC; the interaction is enhanced in an interleukin-12-dependent manner in activated lymphocytes. Interacts (via extracellular domain) with ADA; does not inhibit its dipeptidyl peptidase activity. Interacts with CAV1 (via the N-terminus); the interaction is direct. Interacts (via cytoplasmic tail) with CARD11 (via PDZ domain); its homodimerization is necessary for interaction with CARD11. Interacts with IGF2R; the interaction is direct. Interacts with GPC3. Post-translationally, the soluble form (Dipeptidyl peptidase 4 soluble form also named SDPP) derives from the membrane form (Dipeptidyl peptidase 4 membrane form also named MDPP) by proteolytic processing. In terms of processing, N- and O-Glycosylated. Phosphorylated. Mannose 6-phosphate residues in the carbohydrate moiety are necessary for interaction with IGF2R in activated T-cells. Mannose 6-phosphorylation is induced during T-cell activation. Expressed in bile ducts and other epithelial brush borders (small intestine, kidney, colon, pancreatic duct); acinar structures in salivary glands; endothelial structures and T cell areas in thymus, spleen and lymph node.

It is found in the secreted. It localises to the cell membrane. The protein localises to the apical cell membrane. The protein resides in the cell projection. Its subcellular location is the invadopodium membrane. It is found in the lamellipodium membrane. It localises to the cell junction. The protein localises to the membrane raft. It catalyses the reaction Release of an N-terminal dipeptide, Xaa-Yaa-|-Zaa-, from a polypeptide, preferentially when Yaa is Pro, provided Zaa is neither Pro nor hydroxyproline.. Its activity is regulated as follows. Inhibited by GPC3 and diprotin A. Its function is as follows. Cell surface glycoprotein receptor involved in the costimulatory signal essential for T-cell receptor (TCR)-mediated T-cell activation. Acts as a positive regulator of T-cell coactivation, by binding at least ADA, CAV1, IGF2R, and PTPRC. Its binding to CAV1 and CARD11 induces T-cell proliferation and NF-kappa-B activation in a T-cell receptor/CD3-dependent manner. Its interaction with ADA also regulates lymphocyte-epithelial cell adhesion. In association with FAP is involved in the pericellular proteolysis of the extracellular matrix (ECM), the migration and invasion of endothelial cells into the ECM. May be involved in the promotion of lymphatic endothelial cells adhesion, migration and tube formation. When overexpressed, enhanced cell proliferation, a process inhibited by GPC3. Also acts as a serine exopeptidase with a dipeptidyl peptidase activity that regulates various physiological processes by cleaving peptides in the circulation, including many chemokines, mitogenic growth factors, neuropeptides and peptide hormones. Removes N-terminal dipeptides sequentially from polypeptides having unsubstituted N-termini provided that the penultimate residue is proline. The chain is Dipeptidyl peptidase 4 (Dpp4) from Rattus norvegicus (Rat).